Here is a 562-residue protein sequence, read N- to C-terminus: Protein wntless (562 aa).

At 1-13 (MSGTILENLSGRK) the chain is on the cytoplasmic side. Residues 14–34 (LSILVSSLLLCQVACFLIGGL) form a helical membrane-spanning segment. At 35–239 (YAPVPAGHQI…AIHQNGGFTQ (205 aa)) the chain is on the lumenal side. N-linked (GlcNAc...) asparagine glycosylation is found at N58 and N103. A helical membrane pass occupies residues 240–260 (VWLLLKSVLFPFIIGIMVWFW). The Cytoplasmic segment spans residues 261-270 (RRVHILQRSP). A helical membrane pass occupies residues 271–291 (ALLEYMLLYLGGALSFLNLPL). The Lumenal segment spans residues 292-311 (EYLTLSFEMPYMLLLSDVRQ). A helical membrane pass occupies residues 312–332 (GIFYAMLLSFWLVFAGEHMLI). Residues 333–344 (QDSPNKSTIRSR) are Cytoplasmic-facing. A helical membrane pass occupies residues 345–365 (YWKHLSAVVVGCISLFVFDIC). Over 366-390 (ERGMQLRNPFYSIWTTPLGAKVAMS) the chain is Lumenal. Residues 391-411 (FIVLAGVSAGIYFLFLCYMVW) form a helical membrane-spanning segment. Residues 412 to 441 (KVFKDIGDKRTSLPSMSQARRLHYEGLIYR) are Cytoplasmic-facing. A helical membrane pass occupies residues 442 to 462 (FKFLMLATLLCAGLTVAGFIM). The Lumenal portion of the chain corresponds to 463–482 (GQMAEGHWKWNEDIEIQLTS). The helical transmembrane segment at 483–503 (AFLTGVYGMWNIYIFALLILY) threads the bilayer. At 504–562 (APSHKQWPTMRHSDETTQSNENIVASAASEEIEFSNLPSDSNPSEISSLTSFTRKVAFD) the chain is on the cytoplasmic side. The segment at 538 to 562 (SNLPSDSNPSEISSLTSFTRKVAFD) is disordered. Over residues 539 to 556 (NLPSDSNPSEISSLTSFT) the composition is skewed to polar residues.

Belongs to the wntless family. In terms of assembly, interacts with wg; in the Golgi. Interacts with Vps35, a component of the retromer complex; wls stability is regulated by Vps35.

The protein localises to the presynaptic cell membrane. Its subcellular location is the postsynaptic cell membrane. It localises to the cell membrane. It is found in the endoplasmic reticulum membrane. The protein resides in the endosome membrane. The protein localises to the golgi apparatus membrane. In terms of biological role, a segment polarity gene required for wingless (wg)-dependent patterning processes, acting in both wg-sending cells and wg-target cells. In non-neuronal cells wls directs wg secretion. The wls traffic loop encompasses the Golgi, the cell surface, an endocytic compartment and a retrograde route leading back to the Golgi, and involves clathrin-mediated endocytosis and the retromer complex (a conserved protein complex consisting of Vps35 and Vps26). In neuronal cells (the larval motorneuron NMJ), the wg signal moves across the synapse via the release of wls-containing exosome-like vesicles. Postsynaptic wls is required for the trafficking of fz2 through the fz2-interacting protein Grip. The chain is Protein wntless from Drosophila mojavensis (Fruit fly).